Reading from the N-terminus, the 591-residue chain is Protein misato homolog 1 (591 aa).

This sequence belongs to the misato family.

Its subcellular location is the mitochondrion outer membrane. It localises to the cytoplasm. Involved in the regulation of mitochondrial distribution and morphology. Required for mitochondrial fusion and mitochondrial network formation. The polypeptide is Protein misato homolog 1 (msto1) (Danio rerio (Zebrafish)).